Consider the following 363-residue polypeptide: MSAADMARKNSLINRQLEKEKIDSKKMLKILLLGGPECGKSTIFKQMKIIHMNGFSDLDYVNFRYLIYSNIMQSMDQLLEAAEFFHFPPDDSPSIRRALNHYKSYKVRYSTSEVELNRELADSLSKLYNAEFIKSVLNRKNELKLLDSAVYFLDDIDRISAHEYKPTEMDVLRARVPTTGITEIEFPFKQASLRMVDVGGQRSEQRKWIHCFDNVNGVLFIAAISGYNLYDEDEENRKDDGTPTKTNRLRYSMELFKRIANHQCFSKKTAMILFLNKIDIFKEKIGKYPLTTCFKNYKGVNAFEPACKYVTDRFSRLVSGDIQHEKPLYTHITNATDTRNIDRVFDSCMDVIFKISMEKVGFM.

The region spanning 26-363 is the G-alpha domain; it reads KMLKILLLGG…KISMEKVGFM (338 aa). The G1 motif stretch occupies residues 29-42; that stretch reads KILLLGGPECGKST. Residues 34–41, 172–178, 197–201, 276–279, and Ala335 each bind GTP; these read GGPECGKS, LRARVPT, DVGGQ, and NKID. Mg(2+)-binding residues include Ser41 and Thr178. The G2 motif stretch occupies residues 170 to 178; that stretch reads DVLRARVPT. A G3 motif region spans residues 193 to 202; sequence LRMVDVGGQR. The tract at residues 272 to 279 is G4 motif; that stretch reads ILFLNKID. The G5 motif stretch occupies residues 333-338; it reads TNATDT.

This sequence belongs to the G-alpha family. In terms of assembly, g proteins are composed of 3 units; alpha, beta and gamma. The alpha chain contains the guanine nucleotide binding site. In terms of tissue distribution, expressed in ADL and ASH neurons.

Its function is as follows. Guanine nucleotide-binding proteins (G proteins) are involved as modulators or transducers in various transmembrane signaling systems. Mediates the transduction of food and serotonin signals, which modulates the avoidance response to the odorant octanol. Has a role in lifespan to promote longevity. In Caenorhabditis elegans, this protein is Guanine nucleotide-binding protein alpha-11 subunit (gpa-11).